The primary structure comprises 353 residues: Lipase-specific foldase (353 aa).

The Cytoplasmic segment spans residues 1-19 (MAQADRPARGGLAARPMRG). A helical transmembrane segment spans residues 20-40 (ASFALAGLVACAACAAVVLWL). Residues 41–353 (RPAAPSPAPA…AASLDRGAGG (313 aa)) are Periplasmic-facing.

The protein belongs to the lipase chaperone family. As to quaternary structure, monomer. Interacts with lipase (lip).

It is found in the cell inner membrane. Its function is as follows. Involved in the folding of the extracellular lipase (lip) during its passage through the periplasm. This is Lipase-specific foldase from Burkholderia plantarii.